The sequence spans 402 residues: Eukaryotic initiation factor 4A (402 aa).

Positions 29 to 57 (ESFDDMELKEELLRGIYGFGFEKPSAIQK) match the Q motif motif. One can recognise a Helicase ATP-binding domain in the interval 60–230 (IVPCTTGKDV…NRFMRNPIRI (171 aa)). ATP is bound at residue 73–80 (AQSGTGKT). The short motif at 178–181 (DEAD) is the DEAD box element. The Helicase C-terminal domain occupies 241-402 (GIRQFYINVQ…EMPESIADLI (162 aa)).

This sequence belongs to the DEAD box helicase family. eIF4A subfamily. In terms of assembly, eIF4F is a multi-subunit complex, the composition of which varies with external and internal environmental conditions. It is composed of at least EIF4A, EIF4E and EIF4G.

The catalysed reaction is ATP + H2O = ADP + phosphate + H(+). ATP-dependent RNA helicase which is a subunit of the eIF4F complex involved in cap recognition and is required for mRNA binding to ribosome. In the current model of translation initiation, eIF4A unwinds RNA secondary structures in the 5'-UTR of mRNAs which is necessary to allow efficient binding of the small ribosomal subunit, and subsequent scanning for the initiator codon. This Caenorhabditis elegans protein is Eukaryotic initiation factor 4A (inf-1).